Here is a 366-residue protein sequence, read N- to C-terminus: Putative F-box protein At1g26515 (366 aa).

The segment at 1 to 20 is disordered; the sequence is MKTRSKKTKTENNQEKSKEK. The segment covering 8–20 has biased composition (basic and acidic residues); that stretch reads TKTENNQEKSKEK. The F-box domain maps to 20-66; the sequence is KNKFDQLPLDLEIEIFRRLPLKSVARFLTLSKSCAATIRSPSFITSF.

The sequence is that of Putative F-box protein At1g26515 from Arabidopsis thaliana (Mouse-ear cress).